Consider the following 239-residue polypeptide: 1-(5-phosphoribosyl)-5-[(5-phosphoribosylamino)methylideneamino] imidazole-4-carboxamide isomerase (239 aa).

Aspartate 7 serves as the catalytic Proton acceptor. The active-site Proton donor is aspartate 129.

The protein belongs to the HisA/HisF family.

It localises to the cytoplasm. It catalyses the reaction 1-(5-phospho-beta-D-ribosyl)-5-[(5-phospho-beta-D-ribosylamino)methylideneamino]imidazole-4-carboxamide = 5-[(5-phospho-1-deoxy-D-ribulos-1-ylimino)methylamino]-1-(5-phospho-beta-D-ribosyl)imidazole-4-carboxamide. Its pathway is amino-acid biosynthesis; L-histidine biosynthesis; L-histidine from 5-phospho-alpha-D-ribose 1-diphosphate: step 4/9. The sequence is that of 1-(5-phosphoribosyl)-5-[(5-phosphoribosylamino)methylideneamino] imidazole-4-carboxamide isomerase from Lactiplantibacillus plantarum (strain ATCC BAA-793 / NCIMB 8826 / WCFS1) (Lactobacillus plantarum).